The following is a 730-amino-acid chain: Ribosomal RNA large subunit methyltransferase K/L (730 aa).

Residues 46–157 enclose the THUMP domain; it reads TAYRLCLWSR…RGEAILSLDL (112 aa). A compositionally biased stretch (basic and acidic residues) spans 399 to 408; that stretch reads AAVEEGEPRR. The segment at 399 to 418 is disordered; that stretch reads AAVEEGEPRRQAPVASEPAR.

The protein belongs to the methyltransferase superfamily. RlmKL family.

The protein localises to the cytoplasm. It carries out the reaction guanosine(2445) in 23S rRNA + S-adenosyl-L-methionine = N(2)-methylguanosine(2445) in 23S rRNA + S-adenosyl-L-homocysteine + H(+). It catalyses the reaction guanosine(2069) in 23S rRNA + S-adenosyl-L-methionine = N(2)-methylguanosine(2069) in 23S rRNA + S-adenosyl-L-homocysteine + H(+). Functionally, specifically methylates the guanine in position 2445 (m2G2445) and the guanine in position 2069 (m7G2069) of 23S rRNA. This chain is Ribosomal RNA large subunit methyltransferase K/L, found in Pseudomonas entomophila (strain L48).